Reading from the N-terminus, the 1286-residue chain is Ankyrin-repeat and fibronectin type III domain-containing 1 (1286 aa).

ANK repeat units lie at residues 274–303 (QGNEAMFEAVEQQDLDAVQLLLYQYTPEEL) and 311–340 (EGLTPLDIAIMTNNVPIARILLRTGARESP). The 97-residue stretch at 411–507 (VPANACLMVS…TTTPVCASPS (97 aa)) folds into the Fibronectin type-III domain. The tract at residues 748-755 (GLYLGYLK) is highly conserved peptide sequence. Over residues 999–1011 (SSHIDCLPSTSPS) the composition is skewed to polar residues. Disordered regions lie at residues 999–1032 (SSHIDCLPSTSPSPEMHRRKAVSESQPCSDEEGC), 1086–1106 (KASMGPGQDPQGPGQGPDTDH), 1187–1207 (AEDPGEAEGPGPVVDGPRGLP), and 1242–1286 (AGQD…SSML). Residues 1260-1277 (SSLPSSTSSEMSPDPTSP) show a composition bias toward low complexity.

In terms of tissue distribution, expressed in both the suprachiasmatic nucleus and dorsal medial hypothalamus.

Its function is as follows. May play a role in neuronal function. The protein is Ankyrin-repeat and fibronectin type III domain-containing 1 of Mus musculus (Mouse).